A 384-amino-acid polypeptide reads, in one-letter code: Autophagy-related protein 30 (384 aa).

The segment at 1-63 (MFSRKQVQKR…ASPGQLRPRT (63 aa)) is disordered. Over residues 13–27 (ELSSLHCSNSSNSLN) the composition is skewed to low complexity. Residues 45-63 (RGNNRSDNVASPGQLRPRT) show a composition bias toward polar residues. Phosphoserine is present on Ser-112. The disordered stretch occupies residues 266–291 (VKHDKPSSPLPNYHNTLKQAPSSNSQ). Residues 278-291 (YHNTLKQAPSSNSQ) are compositionally biased toward polar residues.

As to quaternary structure, interacts with ATG11, ATG17, ATG37, PEX3 and PEX14. Post-translationally, phosphorylation at Ser-112 is required for micro- and macropexophagy.

The protein resides in the vacuole lumen. Its subcellular location is the preautophagosomal structure. It is found in the peroxisome membrane. In terms of biological role, acts as the peroxisome receptor for pexophagy. Required for both micropexophagy and macropexophagy, but not for the cytoplasm to vacuole transport (Cvt) or autophagy pathways. Required for functional micropexophagic apparatus (MIPA) and relocation of ATG11 to the peroxisome-sequestering arms of the vacuole. In Komagataella phaffii (strain GS115 / ATCC 20864) (Yeast), this protein is Autophagy-related protein 30 (ATG30).